The chain runs to 167 residues: Small ribosomal subunit protein uS5 (167 aa).

Positions 12-75 (LQEKLITVNR…EQARRNMITI (64 aa)) constitute an S5 DRBM domain.

The protein belongs to the universal ribosomal protein uS5 family. Part of the 30S ribosomal subunit. Contacts proteins S4 and S8.

With S4 and S12 plays an important role in translational accuracy. Its function is as follows. Located at the back of the 30S subunit body where it stabilizes the conformation of the head with respect to the body. The sequence is that of Small ribosomal subunit protein uS5 from Buchnera aphidicola subsp. Acyrthosiphon pisum (strain APS) (Acyrthosiphon pisum symbiotic bacterium).